The sequence spans 72 residues: LITAF domain-containing protein (72 aa).

The 71-residue stretch at 1–71 folds into the LITAF domain; the sequence is MPVQAVCPYC…CQRELFYYHR (71 aa). Zn(2+)-binding residues include cysteine 7 and cysteine 10. A membrane-binding amphipathic helix region spans residues 22 to 45; that stretch reads PGALTWLLCTTLFLFGYVLGCCFL. Residues cysteine 59 and cysteine 62 each coordinate Zn(2+).

This sequence belongs to the CDIP1/LITAF family.

Its subcellular location is the membrane. This Homo sapiens (Human) protein is LITAF domain-containing protein.